A 380-amino-acid chain; its full sequence is Lipid-A-disaccharide synthase (380 aa).

This sequence belongs to the LpxB family.

It catalyses the reaction a lipid X + a UDP-2-N,3-O-bis[(3R)-3-hydroxyacyl]-alpha-D-glucosamine = a lipid A disaccharide + UDP + H(+). It participates in bacterial outer membrane biogenesis; LPS lipid A biosynthesis. Condensation of UDP-2,3-diacylglucosamine and 2,3-diacylglucosamine-1-phosphate to form lipid A disaccharide, a precursor of lipid A, a phosphorylated glycolipid that anchors the lipopolysaccharide to the outer membrane of the cell. The chain is Lipid-A-disaccharide synthase from Pseudomonas savastanoi pv. phaseolicola (strain 1448A / Race 6) (Pseudomonas syringae pv. phaseolicola (strain 1448A / Race 6)).